Consider the following 128-residue polypeptide: Fatty acid binding protein 1-B.1 (128 aa).

Belongs to the calycin superfamily. Fatty-acid binding protein (FABP) family. As to expression, expressed in the yolk syncytial layer (YSL) and subsequently in the intestinal bulb in developing embryos and larvae. In adults, expressed in the intestine.

The protein localises to the cytoplasm. Functionally, binds free fatty acids and their coenzyme A derivatives, bilirubin, and some other small molecules in the cytoplasm. May be involved in intracellular lipid transport. The protein is Fatty acid binding protein 1-B.1 (fabp1b.1) of Danio rerio (Zebrafish).